We begin with the raw amino-acid sequence, 214 residues long: Calcineurin B homologous protein 3 (214 aa).

A lipid anchor (N-myristoyl glycine) is attached at Gly2. The region spanning 110–145 is the EF-hand domain; that stretch reads FRKEKLKFLFHMYDADYDGIITLQEYKNVLDELMSG. Ca(2+) contacts are provided by Asp123, Asp125, Asp127, and Glu134.

Belongs to the calcineurin regulatory subunit family. CHP subfamily. Monomer. Homodimer. In terms of tissue distribution, expressed in the bipotential gonad by E4.5 and expressed in both the testis and ovary by E5.5, but with expression higher in the testis. Expressed in the testis cords but also at low levels in the interstitium. In the ovary, expression is principally in the ovarian cortex, but also in the medulla. Also expressed in the embryonic brain, with expression highest in the region between the nasal placode and olfactory bulb. Also expressed in the embryonic heart and tail.

The protein resides in the nucleus. The protein localises to the cytoplasm. Its subcellular location is the membrane. It localises to the cell membrane. It is found in the cell projection. The protein resides in the lamellipodium. The protein localises to the ruffle membrane. Functionally, functions as an integral cofactor in cell pH regulation by controlling plasma membrane-type Na(+)/H(+) exchange activity. Promotes the induction of hematopoietic stem cell differentiation toward megakaryocytic lineage. Essential for the coupling of ERK cascade activation with the expression of ETS family genes in megakaryocytic differentiation. Also involved in granulocytic differentiation in a ERK-dependent manner. Inhibits the phosphatase activity of calcineurin. The chain is Calcineurin B homologous protein 3 from Gallus gallus (Chicken).